We begin with the raw amino-acid sequence, 527 residues long: DNA damage-binding protein cmr1 (527 aa).

The segment at 35–90 (AGLFPPKSARSSPGGLTKPKKKPAPKKVKKEDEDLVPRRMSSRLRGLAADSEVAKR) is disordered. Residues 52 to 62 (KPKKKPAPKKV) are compositionally biased toward basic residues. 7 WD repeats span residues 185–226 (LTPE…PISA), 249–289 (PHTR…SVEK), 296–336 (SDDI…RSAV), 341–381 (LSEK…HDEP), 388–427 (VSRLSVSHAAFNSAGQIATSSYDDTLKIYDFGSKGIAAWK), 450–493 (GRWV…LAQL), and 496–527 (DGITAVPAVAVFHRSTNWIAGGTASGKICLWM). The segment at 284–303 (TTSVEKYAPESTSDDIPISG) is disordered.

Belongs to the WD repeat DDB2/WDR76 family.

Its function is as follows. DNA-binding protein that binds to both single- and double-stranded DNA. Binds preferentially to UV-damaged DNA. May be involved in DNA-metabolic processes. This chain is DNA damage-binding protein cmr1, found in Neosartorya fischeri (strain ATCC 1020 / DSM 3700 / CBS 544.65 / FGSC A1164 / JCM 1740 / NRRL 181 / WB 181) (Aspergillus fischerianus).